Here is an 838-residue protein sequence, read N- to C-terminus: Translation initiation factor IF-2 (838 aa).

Disordered regions lie at residues 30–60 and 94–254; these read PHTAAEEHVSDSEKQSLLTHLKSSHKAKVEE and QRSP…PTGP. 2 stretches are compositionally biased toward basic and acidic residues: residues 33-43 and 96-136; these read AAEEHVSDSEK and SPEE…EARR. Residues 137–173 are compositionally biased toward low complexity; the sequence is QPAPVAEPVAAQAAAPAPAPVVEPVQEAPVATAAPAA. 2 stretches are compositionally biased toward basic and acidic residues: residues 174 to 214 and 222 to 231; these read DARK…EKAP and TTDEESDGFR. The segment covering 232-245 has biased composition (basic residues); it reads RGGRGKAKLKKRNA. The region spanning 338 to 507 is the tr-type G domain; the sequence is ARAPVVTVMG…LLQAEVLELK (170 aa). The segment at 347-354 is G1; sequence GHVDHGKT. 347-354 contributes to the GTP binding site; sequence GHVDHGKT. The interval 372–376 is G2; it reads GITQH. The tract at residues 393–396 is G3; the sequence is DTPG. GTP is bound by residues 393–397 and 447–450; these read DTPGH and NKID. Residues 447–450 form a G4 region; the sequence is NKID. The segment at 483 to 485 is G5; it reads SAK.

It belongs to the TRAFAC class translation factor GTPase superfamily. Classic translation factor GTPase family. IF-2 subfamily.

Its subcellular location is the cytoplasm. Functionally, one of the essential components for the initiation of protein synthesis. Protects formylmethionyl-tRNA from spontaneous hydrolysis and promotes its binding to the 30S ribosomal subunits. Also involved in the hydrolysis of GTP during the formation of the 70S ribosomal complex. In Pseudomonas fluorescens (strain ATCC BAA-477 / NRRL B-23932 / Pf-5), this protein is Translation initiation factor IF-2.